We begin with the raw amino-acid sequence, 40 residues long: Auxin-responsive endogenous peptide 1 (40 aa).

The chain crosses the membrane as a helical span at residues Leu-7 to His-29.

In terms of tissue distribution, expressed in cotyledons, hypocotyls, roots, newly developing leaves and shoot apical meristem. Not detected in flowers, siliques or mature leaves.

It localises to the cytoplasm. Its subcellular location is the nucleus. The protein resides in the membrane. Its function is as follows. Negative regulator of the auxin response. This is Auxin-responsive endogenous peptide 1 from Arabidopsis thaliana (Mouse-ear cress).